The following is a 426-amino-acid chain: Enolase (426 aa).

A (2R)-2-phosphoglycerate-binding site is contributed by Q165. The Proton donor role is filled by E209. 3 residues coordinate Mg(2+): D244, E287, and D313. (2R)-2-phosphoglycerate is bound by residues K338, R367, S368, and K389. K338 serves as the catalytic Proton acceptor.

It belongs to the enolase family. Requires Mg(2+) as cofactor.

It localises to the cytoplasm. Its subcellular location is the secreted. The protein localises to the cell surface. The enzyme catalyses (2R)-2-phosphoglycerate = phosphoenolpyruvate + H2O. Its pathway is carbohydrate degradation; glycolysis; pyruvate from D-glyceraldehyde 3-phosphate: step 4/5. Its function is as follows. Catalyzes the reversible conversion of 2-phosphoglycerate (2-PG) into phosphoenolpyruvate (PEP). It is essential for the degradation of carbohydrates via glycolysis. The polypeptide is Enolase (Methanococcus maripaludis (strain C5 / ATCC BAA-1333)).